A 154-amino-acid chain; its full sequence is Large ribosomal subunit protein uL13 (154 aa).

Belongs to the universal ribosomal protein uL13 family. Part of the 50S ribosomal subunit.

In terms of biological role, this protein is one of the early assembly proteins of the 50S ribosomal subunit, although it is not seen to bind rRNA by itself. It is important during the early stages of 50S assembly. The protein is Large ribosomal subunit protein uL13 of Bradyrhizobium diazoefficiens (strain JCM 10833 / BCRC 13528 / IAM 13628 / NBRC 14792 / USDA 110).